The following is a 177-amino-acid chain: Protein TERMINAL FLOWER 1 (177 aa).

The protein belongs to the phosphatidylethanolamine-binding protein family. As to expression, expressed below the apical dome of inflorescence and coflorescence meristems, and in inflorescence stem.

Its subcellular location is the cytoplasm. Functionally, controls inflorescence meristem identity and is required for maintenance of an indeterminate inflorescence. Prevents the expression of 'APETALA1' and 'LEAFY'. Also plays a role in the regulation of the time of flowering in the long-day flowering pathway. May form complexes with phosphorylated ligands by interfering with kinases and their effectors. The protein is Protein TERMINAL FLOWER 1 (TFL1) of Arabidopsis thaliana (Mouse-ear cress).